We begin with the raw amino-acid sequence, 239 residues long: Phosphoribosylaminoimidazole-succinocarboxamide synthase (239 aa).

Belongs to the SAICAR synthetase family.

The enzyme catalyses 5-amino-1-(5-phospho-D-ribosyl)imidazole-4-carboxylate + L-aspartate + ATP = (2S)-2-[5-amino-1-(5-phospho-beta-D-ribosyl)imidazole-4-carboxamido]succinate + ADP + phosphate + 2 H(+). It participates in purine metabolism; IMP biosynthesis via de novo pathway; 5-amino-1-(5-phospho-D-ribosyl)imidazole-4-carboxamide from 5-amino-1-(5-phospho-D-ribosyl)imidazole-4-carboxylate: step 1/2. This is Phosphoribosylaminoimidazole-succinocarboxamide synthase from Psychrobacter sp. (strain PRwf-1).